Reading from the N-terminus, the 406-residue chain is Phosphopentomutase (406 aa).

Asp10, Asp305, His310, Asp346, His347, and His358 together coordinate Mn(2+).

This sequence belongs to the phosphopentomutase family. The cofactor is Mn(2+).

It localises to the cytoplasm. The enzyme catalyses 2-deoxy-alpha-D-ribose 1-phosphate = 2-deoxy-D-ribose 5-phosphate. It carries out the reaction alpha-D-ribose 1-phosphate = D-ribose 5-phosphate. It functions in the pathway carbohydrate degradation; 2-deoxy-D-ribose 1-phosphate degradation; D-glyceraldehyde 3-phosphate and acetaldehyde from 2-deoxy-alpha-D-ribose 1-phosphate: step 1/2. In terms of biological role, isomerase that catalyzes the conversion of deoxy-ribose 1-phosphate (dRib-1-P) and ribose 1-phosphate (Rib-1-P) to deoxy-ribose 5-phosphate (dRib-5-P) and ribose 5-phosphate (Rib-5-P), respectively. This chain is Phosphopentomutase, found in Methylorubrum extorquens (strain PA1) (Methylobacterium extorquens).